Consider the following 692-residue polypeptide: Transforming growth factor beta activator LRRC33 (692 aa).

A signal peptide spans 1–18 (MELLPLWLCLGFHFLTVG). The Extracellular portion of the chain corresponds to 19 to 650 (WRNRSGTATA…CKWERLDLGL (632 aa)). The N-linked (GlcNAc...) asparagine glycan is linked to asparagine 21. The region spanning 29–56 (ASQGVCKLVGGAADCRGQSLASVPSSLP) is the LRRNT domain. LRR repeat units follow at residues 58-79 (HARMLTLDANPLKTLWNHSLQP), 82-103 (LLESLSLHSCHLERISRGAFQE), 106-127 (HLRSLVLGDNCLSENYEETAAA), 133-155 (GLRRLDLSGNALTEDMAALMLQN), 158-179 (SLRSVSLAGNTIMRLDDSVFEG), 182-203 (RLRELDLQRNYIFEIEGGAFDG), 206-227 (ELRHLNLAFNNLPCIVDFGLTR), 228-239 (LRVLNVSYNVLE), 251-272 (ELETLDLSHNQLLFFPLLPQYS), and 273-294 (KLRTLLLRDNNMGFYRDLYNTS). N-linked (GlcNAc...) asparagine glycosylation is present at asparagine 74. Asparagine 155 carries N-linked (GlcNAc...) asparagine glycosylation. N-linked (GlcNAc...) asparagine glycosylation occurs at asparagine 232. 3 N-linked (GlcNAc...) asparagine glycosylation sites follow: asparagine 292, asparagine 309, and asparagine 312. LRR repeat units lie at residues 329–350 (DLRFLDMSQNQFQYLPDGFLRK), 353–374 (SLSHLNLHQNCLMTLHIREHEP), 377–398 (ALTELDLSHNQLSELHLAPGLA), 403–424 (SLRLFNLSSNQLLGVPPGLFAN), 427–447 (NITTLDMSHNQISLCPLPAAS), 463–484 (SLRSLSLEGCGLGALPDCPFQG), 486–507 (SLTYLDLSSNWGVLNGSLAPLQ), 512–534 (MLQVLSLRNMGLHSSFMALDFSG), 537–558 (NLRDLDLSGNCLTTFPRFGGSL), 559–580 (ALETLDLRRNSLTALPQKAVSE), and 585–594 (GLRTIYLSQN). 2 N-linked (GlcNAc...) asparagine glycosylation sites follow: asparagine 408 and asparagine 427. A glycan (N-linked (GlcNAc...) asparagine) is linked at asparagine 500. One can recognise an LRRCT domain in the interval 595-643 (PYDCCGVDGWGALQHGQTVADWAMVTCNLSSKIIRVTELPGGVPRDCKW). Residue asparagine 622 is glycosylated (N-linked (GlcNAc...) asparagine). The helical transmembrane segment at 651–671 (LYLVLILPSCLTLLVACTVIV) threads the bilayer. Topologically, residues 672-692 (LTFKKPLLQVIKSRCHWSSVY) are cytoplasmic.

This sequence belongs to the LRRC32/LRRC33 family. As to quaternary structure, interacts with TGFB1; associates via disulfide bonds with the Latency-associated peptide chain (LAP) regulatory chain of TGFB1, leading to regulate activation of TGF-beta-1. Interacts (via LRR repeats) with TLR2, TLR3, TLR4, TLR9 and probably other Toll-like receptors. Interacts with CYBB/NOX2; the interaction is direct. As to expression, mainly expressed in cells of hematopoietic origin. Highly expressed in bone marrow, thymus, liver, lung, intestine and spleen. In the brain, highly expressed in microglia.

The protein localises to the cell membrane. The protein resides in the endoplasmic reticulum membrane. Its function is as follows. Key regulator of transforming growth factor beta-1 (TGFB1) specifically required for microglia function in the nervous system. Required for activation of latent TGF-beta-1 in macrophages and microglia: associates specifically via disulfide bonds with the Latency-associated peptide (LAP), which is the regulatory chain of TGFB1, and regulates integrin-dependent activation of TGF-beta-1. TGF-beta-1 activation mediated by LRRC33/NRROS is highly localized: there is little spreading of TGF-beta-1 activated from one microglial cell to neighboring microglia, suggesting the existence of localized and selective activation of TGF-beta-1 by LRRC33/NRROS. Indirectly plays a role in Toll-like receptor (TLR) signaling: ability to inhibit TLR-mediated NF-kappa-B activation and cytokine production is probably a consequence of its role in TGF-beta-1 signaling. The chain is Transforming growth factor beta activator LRRC33 from Homo sapiens (Human).